An 859-amino-acid polypeptide reads, in one-letter code: Bifunctional levopimaradiene synthase, chloroplastic (859 aa).

The transit peptide at 1–52 (MALLSSSLSSHIPTGAHHLTLNAYANTQCIPHFFSTLNAGTSAGKRSSLYLR) directs the protein to the chloroplast. 6 residues coordinate Mg(2+): Asp392, Asp394, Asp611, Asp615, Asn755, and Glu763. A DXDD motif motif is present at residues 392–395 (DIDD). A DDXXD motif motif is present at residues 611 to 615 (DDLYD).

The protein belongs to the terpene synthase family. Tpsd subfamily. It depends on Mg(2+) as a cofactor. Requires Mn(2+) as cofactor.

It is found in the plastid. The protein resides in the chloroplast. It carries out the reaction (+)-copalyl diphosphate = abieta-8(14),12-diene + diphosphate. The enzyme catalyses (+)-copalyl diphosphate = abieta-7,13-diene + diphosphate. It participates in secondary metabolite biosynthesis; terpenoid biosynthesis. Its pathway is terpene metabolism; oleoresin biosynthesis. In terms of biological role, terpene synthase (di-TPS) involved in the biosynthesis of diterpene natural products included in conifer oleoresin secretions and volatile emissions; these compounds contribute to biotic and abiotic stress defense against herbivores and pathogens. Catalyzes the conversion of (+)-copalyl diphosphate ((+)-CPP) to isopimaradiene. The chain is Bifunctional levopimaradiene synthase, chloroplastic from Picea sitchensis (Sitka spruce).